We begin with the raw amino-acid sequence, 395 residues long: ATP-dependent RNA helicase eIF4A (395 aa).

S2 carries the N-acetylserine modification. The Q motif signature appears at 22 to 50; it reads YKFDDMELDENLLRGVFGYGFEEPSAIQQ. The region spanning 53–222 is the Helicase ATP-binding domain; it reads IMPIIEGHDV…TKFMRNPVRI (170 aa). 66–73 contributes to the ATP binding site; sequence AQSGTGKT. T73 carries the phosphothreonine modification. Phosphoserine is present on residues S77 and S129. A Phosphothreonine modification is found at T146. A DEAD box motif is present at residues 170–173; sequence DEAD. The Helicase C-terminal domain maps to 233–394; sequence GIKQFYVNVE…ELPSDIATLL (162 aa).

It belongs to the DEAD box helicase family. eIF4A subfamily. In terms of assembly, component of the eIF4F complex, which composition varies with external and internal environmental conditions. It is composed of at least eIF4A, eIF4E and eIF4G.

The protein localises to the cytoplasm. It carries out the reaction ATP + H2O = ADP + phosphate + H(+). In terms of biological role, ATP-dependent RNA helicase which is a subunit of the eIF4F complex involved in cap recognition and is required for mRNA binding to ribosome. In the current model of translation initiation, eIF4A unwinds RNA secondary structures in the 5'-UTR of mRNAs which is necessary to allow efficient binding of the small ribosomal subunit, and subsequent scanning for the initiator codon. The sequence is that of ATP-dependent RNA helicase eIF4A (TIF1) from Saccharomyces cerevisiae (strain YJM789) (Baker's yeast).